Reading from the N-terminus, the 290-residue chain is MPTLQTLRRKVKTIQNITHIVHSMETLSMVKIRALQDRSLRLKPYTEELNNILMELVKRLSNEYLNHPLVKERVVYKTGVLVFTSDLGFCGSYNLQIIETLKKFIGNKKSQNLVFYSVGSYAQRYLSSNNFNIRKKYIKFLEDTSFSNAKLLARDLLDDFLNYYIDELFVIYFDFINIAKQEVRIKKLLPLIPISLEEKKEEFFLFLPSLSEILDPLLMDIFETQIHQIMLDSAASEQAFRRFAMKRAHENAQKIYSKLLFQLNQLRQNQITRELLDITSSIEAMKEEVK.

Belongs to the ATPase gamma chain family. In terms of assembly, F-type ATPases have 2 components, CF(1) - the catalytic core - and CF(0) - the membrane proton channel. CF(1) has five subunits: alpha(3), beta(3), gamma(1), delta(1), epsilon(1). CF(0) has three main subunits: a, b and c.

Its subcellular location is the cell inner membrane. Produces ATP from ADP in the presence of a proton gradient across the membrane. The gamma chain is believed to be important in regulating ATPase activity and the flow of protons through the CF(0) complex. The protein is ATP synthase gamma chain of Dictyoglomus thermophilum (strain ATCC 35947 / DSM 3960 / H-6-12).